A 123-amino-acid chain; its full sequence is Succinate dehydrogenase assembly factor 3, mitochondrial (123 aa).

Residues Met-1–Leu-31 constitute a mitochondrion transit peptide.

The protein belongs to the complex I LYR family. SDHAF3 subfamily. As to quaternary structure, interacts with sdhb within an sdha-sdhb subcomplex.

It localises to the mitochondrion matrix. Its function is as follows. Plays an essential role in the assembly of succinate dehydrogenase (SDH), an enzyme complex (also referred to as respiratory complex II) that is a component of both the tricarboxylic acid (TCA) cycle and the mitochondrial electron transport chain, and which couples the oxidation of succinate to fumarate with the reduction of ubiquinone (coenzyme Q) to ubiquinol. Promotes maturation of the iron-sulfur protein subunit sdhb of the SDH catalytic dimer, protecting it from the deleterious effects of oxidants. May act together with SDHAF1. The protein is Succinate dehydrogenase assembly factor 3, mitochondrial of Danio rerio (Zebrafish).